Here is a 163-residue protein sequence, read N- to C-terminus: Small ribosomal subunit protein uS5 (163 aa).

The S5 DRBM domain occupies 8–71; that stretch reads LIEKIVYLNR…EKARKEMISV (64 aa).

The protein belongs to the universal ribosomal protein uS5 family. As to quaternary structure, part of the 30S ribosomal subunit. Contacts proteins S4 and S8.

Its function is as follows. With S4 and S12 plays an important role in translational accuracy. In terms of biological role, located at the back of the 30S subunit body where it stabilizes the conformation of the head with respect to the body. The sequence is that of Small ribosomal subunit protein uS5 from Maridesulfovibrio salexigens (strain ATCC 14822 / DSM 2638 / NCIMB 8403 / VKM B-1763) (Desulfovibrio salexigens).